Consider the following 361-residue polypeptide: Free fatty acid receptor 4 (361 aa).

Residues Met1 to Thr45 lie on the Extracellular side of the membrane. N-linked (GlcNAc...) asparagine glycosylation occurs at Asn21. Residues Val46 to Ala66 traverse the membrane as a helical segment. Over Arg67–Leu77 the chain is Cytoplasmic. Residues Val78–Val98 traverse the membrane as a helical segment. Residues Arg99–His112 are Extracellular-facing. Cys111 and Cys194 are joined by a disulfide. A helical membrane pass occupies residues Leu113–Ser133. Residues Leu134 to Ala156 lie on the Cytoplasmic side of the membrane. A helical transmembrane segment spans residues Val157 to Phe177. The Extracellular segment spans residues Arg178–Glu204. Residues Ile205–Ile225 form a helical membrane-spanning segment. Residues Ser226 to Leu268 are Cytoplasmic-facing. Residues Leu269–Ile289 form a helical membrane-spanning segment. At Gln290–Asp295 the chain is on the extracellular side. Residues Leu296–Leu316 form a helical membrane-spanning segment. At Asn317 to Gly361 the chain is on the cytoplasmic side. Phosphothreonine occurs at positions 347 and 349. A phosphoserine mark is found at Ser350, Ser357, and Ser360.

It belongs to the G-protein coupled receptor 1 family. In terms of assembly, interacts (via C-terminus) with ARRB2 following LCFAs stimulation. Post-translationally, phosphorylated at two clusters of Ser and Thr residues located in the intracellular C-terminus, a prerequisite for FFAR4 internalization via an ARRB2-dependent pathway. The predominant isoform in human tissues. Expressed in adipose tissue, pancreatic islets, lung and brain. Expressed in alpha cells of pancreatic islets. Expressed in primary cilia of perivascular preadipocytes of white adipose tissue (at protein level). As to expression, abundant expression in the intestinal tract. Expressed in colonic intraepithelial neuroendocrine cells.

Its subcellular location is the cell membrane. It localises to the endosome membrane. The protein localises to the lysosome membrane. It is found in the cell projection. The protein resides in the cilium membrane. In terms of biological role, G-protein-coupled receptor for long-chain fatty acids (LCFAs) with a major role in adipogenesis, energy metabolism and inflammation. Signals via G-protein and beta-arrestin pathways. LCFAs sensing initiates activation of phosphoinositidase C-linked G proteins GNAQ and GNA11 (G(q)/G(11)), inducing a variety of cellular responses via second messenger pathways such as intracellular calcium mobilization, modulation of cyclic adenosine monophosphate (cAMP) production, and mitogen-activated protein kinases (MAPKs). After LCFAs binding, associates with beta-arrestin ARRB2 that acts as an adapter protein coupling the receptor to specific downstream signaling pathways, as well as mediating receptor endocytosis. In response to dietary fats, plays an important role in the regulation of adipocyte proliferation and differentiation. Acts as a receptor for omega-3 polyunsaturated fatty acids (PUFAs) at primary cilium of perivascular preadipocytes, initiating an adipogenic program via cAMP and CTCF-dependent chromatin remodeling that ultimately results in transcriptional activation of adipogenic genes and cell cycle entry. Induces differentiation of brown adipocytes probably via autocrine and endocrine functions of FGF21 hormone. Activates brown adipocytes by initiating intracellular calcium signaling that leads to mitochondrial depolarization and fission, and overall increased mitochondrial respiration. Consequently stimulates fatty acid uptake and oxidation in mitochondria together with UCP1-mediated thermogenic respiration, eventually reducing fat mass. Regulates bi-potential differentiation of bone marrow mesenchymal stem cells toward osteoblasts or adipocytes likely by up-regulating distinct integrins. In response to dietary fats regulates hormone secretion and appetite. Stimulates GIP and GLP1 secretion from enteroendocrine cells as well as GCG secretion in pancreatic alpha cells, thereby playing a role in the regulation of blood glucose levels. Negatively regulates glucose-induced SST secretion in pancreatic delta cells. Mediates LCFAs inhibition of GHRL secretion, an appetite-controlling hormone. In taste buds, contributes to sensing of dietary fatty acids by the gustatory system. During the inflammatory response, promotes anti-inflammatory M2 macrophage differentiation in adipose tissue. Mediates the anti-inflammatory effects of omega-3 PUFAs via inhibition of NLRP3 inflammasome activation. In this pathway, interacts with adapter protein ARRB2 and inhibits the priming step triggered by Toll-like receptors (TLRs) at the level of TAK1 and TAB1. Further inhibits the activation step when ARRB2 directly associates with NLRP3, leading to inhibition of pro-inflammatory cytokine release. Mediates LCFAs anti-apoptotic effects. Its function is as follows. Receptor for LCFAs decoupled from G-protein signaling. May signal through beta-arrestin pathway. After LCFAs binding, associates with beta-arrestin ARRB2 that may act as an adapter protein coupling the receptor to specific downstream signaling pathways, as well as mediating receptor endocytosis. This chain is Free fatty acid receptor 4, found in Homo sapiens (Human).